The following is a 390-amino-acid chain: Lipid-A-disaccharide synthase (390 aa).

It belongs to the LpxB family.

The enzyme catalyses a lipid X + a UDP-2-N,3-O-bis[(3R)-3-hydroxyacyl]-alpha-D-glucosamine = a lipid A disaccharide + UDP + H(+). Its pathway is bacterial outer membrane biogenesis; LPS lipid A biosynthesis. In terms of biological role, condensation of UDP-2,3-diacylglucosamine and 2,3-diacylglucosamine-1-phosphate to form lipid A disaccharide, a precursor of lipid A, a phosphorylated glycolipid that anchors the lipopolysaccharide to the outer membrane of the cell. This Haemophilus influenzae (strain 86-028NP) protein is Lipid-A-disaccharide synthase.